The sequence spans 414 residues: Succinylornithine transaminase (414 aa).

Lys-260 carries the N6-(pyridoxal phosphate)lysine modification.

Belongs to the class-III pyridoxal-phosphate-dependent aminotransferase family. AstC subfamily. Requires pyridoxal 5'-phosphate as cofactor.

It carries out the reaction N(2)-succinyl-L-ornithine + 2-oxoglutarate = N-succinyl-L-glutamate 5-semialdehyde + L-glutamate. It participates in amino-acid degradation; L-arginine degradation via AST pathway; L-glutamate and succinate from L-arginine: step 3/5. In terms of biological role, catalyzes the transamination of N(2)-succinylornithine and alpha-ketoglutarate into N(2)-succinylglutamate semialdehyde and glutamate. Can also act as an acetylornithine aminotransferase. This chain is Succinylornithine transaminase, found in Yersinia pseudotuberculosis serotype I (strain IP32953).